A 71-amino-acid chain; its full sequence is Defensin 1 (71 aa).

The signal sequence occupies residues 1 to 25; the sequence is KTVAGFCIFFLVLFLAQEGVVKTEA. 3 disulfide bridges follow: C28–C71, C39–C60, and C45–C65.

Belongs to the DEFL family. As to quaternary structure, may form dimers. Post-translationally, not glycosylated. In terms of processing, contains 4 disulfide bonds. Met-61 and Met-63 might be oxidized in some molecules.

Probably has antifungal activity. The sequence is that of Defensin 1 from Arachis hypogaea (Peanut).